The following is a 122-amino-acid chain: Large ribosomal subunit protein uL14 (122 aa).

The protein belongs to the universal ribosomal protein uL14 family. In terms of assembly, part of the 50S ribosomal subunit. Forms a cluster with proteins L3 and L19. In the 70S ribosome, L14 and L19 interact and together make contacts with the 16S rRNA in bridges B5 and B8.

Functionally, binds to 23S rRNA. Forms part of two intersubunit bridges in the 70S ribosome. This is Large ribosomal subunit protein uL14 from Rickettsia felis (strain ATCC VR-1525 / URRWXCal2) (Rickettsia azadi).